The sequence spans 38 residues: Large ribosomal subunit protein bL36 (38 aa).

The protein belongs to the bacterial ribosomal protein bL36 family.

The polypeptide is Large ribosomal subunit protein bL36 (Hahella chejuensis (strain KCTC 2396)).